We begin with the raw amino-acid sequence, 506 residues long: Probable cytosol aminopeptidase (506 aa).

Residues lysine 270 and aspartate 275 each coordinate Mn(2+). The active site involves lysine 282. Mn(2+)-binding residues include aspartate 293, aspartate 352, and glutamate 354. Residue arginine 356 is part of the active site.

The protein belongs to the peptidase M17 family. Requires Mn(2+) as cofactor.

It is found in the cytoplasm. It catalyses the reaction Release of an N-terminal amino acid, Xaa-|-Yaa-, in which Xaa is preferably Leu, but may be other amino acids including Pro although not Arg or Lys, and Yaa may be Pro. Amino acid amides and methyl esters are also readily hydrolyzed, but rates on arylamides are exceedingly low.. The enzyme catalyses Release of an N-terminal amino acid, preferentially leucine, but not glutamic or aspartic acids.. In terms of biological role, presumably involved in the processing and regular turnover of intracellular proteins. Catalyzes the removal of unsubstituted N-terminal amino acids from various peptides. The sequence is that of Probable cytosol aminopeptidase from Photorhabdus laumondii subsp. laumondii (strain DSM 15139 / CIP 105565 / TT01) (Photorhabdus luminescens subsp. laumondii).